We begin with the raw amino-acid sequence, 146 residues long: Hemoglobin subunit beta (146 aa).

V1 carries the post-translational modification N-acetylvaline. The region spanning 2–146 (HLSGEEKGAV…VATALAHKYH (145 aa)) is the Globin domain. Phosphothreonine is present on T12. S44 carries the post-translational modification Phosphoserine. At K59 the chain carries N6-acetyllysine. Heme b is bound at residue H63. K82 carries the N6-acetyllysine modification. H92 contacts heme b. C93 carries the post-translational modification S-nitrosocysteine. K144 carries the post-translational modification N6-acetyllysine.

The protein belongs to the globin family. In terms of assembly, heterotetramer of two alpha chains and two beta chains. As to expression, red blood cells.

Its function is as follows. Involved in oxygen transport from the lung to the various peripheral tissues. This is Hemoglobin subunit beta (HBB) from Tadarida brasiliensis (Brazilian free-tailed bat).